Reading from the N-terminus, the 354-residue chain is Guanine nucleotide-binding protein G(o) subunit alpha (354 aa).

The N-myristoyl glycine moiety is linked to residue G2. Residue C3 is the site of S-palmitoyl cysteine attachment. In terms of domain architecture, G-alpha spans 32–354; that stretch reads KDVKLLLLGA…ANNLRGCGLY (323 aa). The interval 35–48 is G1 motif; it reads KLLLLGAGESGKST. E43, K46, S47, T48, S152, L176, R177, T178, and R179 together coordinate GTP. A Mg(2+)-binding site is contributed by S47. Residues 174 to 182 form a G2 motif region; it reads DILRTRVKT. Position 179 is an ADP-ribosylarginine; by cholera toxin (R179). T182 is a Mg(2+) binding site. A G3 motif region spans residues 197–206; the sequence is FRLFDVGGQR. Position 205 is a 5-glutamyl histamine (Q205). The interval 266-273 is G4 motif; that stretch reads ILFLNKKD. N270, D273, and C325 together coordinate GTP. Residues 324–329 are G5 motif; it reads TCATDT. C351 carries S-palmitoyl cysteine lipidation. The residue at position 351 (C351) is an ADP-ribosylcysteine; by pertussis toxin.

Belongs to the G-alpha family. G(i/o/t/z) subfamily. G proteins are composed of 3 units; alpha, beta and gamma. The alpha chain contains the guanine nucleotide binding site. Forms a complex with GNB1 and GNG3. Interacts with RGS14. Interacts with RGS16. Interacts with RGS19. Interacts (when palmitoylated) with ADGRG3. Post-translationally, histaminylated at Gln-205 residues by TGM2. In terms of processing, palmitoylated at Cys-351, leading to binding to ADGRG3.

The protein localises to the cell membrane. It localises to the membrane. The catalysed reaction is GTP + H2O = GDP + phosphate + H(+). Its activity is regulated as follows. The GTPase activity is promoted by GTPAse activators, such as RGS14, RGS16 and RGS19. Guanine nucleotide-binding proteins (G proteins) function as transducers downstream of G protein-coupled receptors (GPCRs) in numerous signaling cascades. The alpha chain contains the guanine nucleotide binding site and alternates between an active, GTP-bound state and an inactive, GDP-bound state. Signaling by an activated GPCR promotes GDP release and GTP binding. The alpha subunit has a low GTPase activity that converts bound GTP to GDP, thereby terminating the signal. Both GDP release and GTP hydrolysis are modulated by numerous regulatory proteins. Signaling is mediated via effector proteins, such as adenylate cyclase. Inhibits adenylate cyclase activity, leading to decreased intracellular cAMP levels. The polypeptide is Guanine nucleotide-binding protein G(o) subunit alpha (GNAO1) (Homo sapiens (Human)).